We begin with the raw amino-acid sequence, 328 residues long: Formyltetrahydrofolate deformylase 2, mitochondrial (328 aa).

The N-terminal 12 residues, 1 to 12 (MIRRVSTTSCLS), are a transit peptide targeting the mitochondrion. Positions 46 to 129 (FHVFHCPDVV…SVVRVPSLDP (84 aa)) constitute an ACT domain. Asp-272 is an active-site residue.

Belongs to the PurU family. Expressed in leaves, cotyledons, roots, seeds and flowers.

It localises to the mitochondrion. It carries out the reaction (6R)-10-formyltetrahydrofolate + H2O = (6S)-5,6,7,8-tetrahydrofolate + formate + H(+). Its function is as follows. Deformylase involved in photorespiration. Prevents excessive accumulation of 5-formyl tetrahydrofolate (THF), a potent inhibitor of the Gly decarboxylase/Ser hydroxymethyltransferase complex. The sequence is that of Formyltetrahydrofolate deformylase 2, mitochondrial (PURU2) from Arabidopsis thaliana (Mouse-ear cress).